A 511-amino-acid chain; its full sequence is Bifunctional purine biosynthesis protein PurH (511 aa).

An MGS-like domain is found at 1 to 145; the sequence is MKKRALVSVS…KNHKFVSVIV (145 aa).

It belongs to the PurH family.

It carries out the reaction (6R)-10-formyltetrahydrofolate + 5-amino-1-(5-phospho-beta-D-ribosyl)imidazole-4-carboxamide = 5-formamido-1-(5-phospho-D-ribosyl)imidazole-4-carboxamide + (6S)-5,6,7,8-tetrahydrofolate. The enzyme catalyses IMP + H2O = 5-formamido-1-(5-phospho-D-ribosyl)imidazole-4-carboxamide. Its pathway is purine metabolism; IMP biosynthesis via de novo pathway; 5-formamido-1-(5-phospho-D-ribosyl)imidazole-4-carboxamide from 5-amino-1-(5-phospho-D-ribosyl)imidazole-4-carboxamide (10-formyl THF route): step 1/1. The protein operates within purine metabolism; IMP biosynthesis via de novo pathway; IMP from 5-formamido-1-(5-phospho-D-ribosyl)imidazole-4-carboxamide: step 1/1. This chain is Bifunctional purine biosynthesis protein PurH, found in Bacillus mycoides (strain KBAB4) (Bacillus weihenstephanensis).